We begin with the raw amino-acid sequence, 353 residues long: tRNA-specific 2-thiouridylase MnmA 2 (353 aa).

ATP-binding positions include 9-16 (AMSGGVDS) and Met-35. The active-site Nucleophile is the Cys-98. A disulfide bridge connects residues Cys-98 and Cys-194. Gly-122 lines the ATP pocket. Positions 144-146 (KDQ) are interaction with tRNA. The active-site Cysteine persulfide intermediate is Cys-194. Residues 300 to 301 (RY) form an interaction with tRNA region.

The protein belongs to the MnmA/TRMU family.

It is found in the cytoplasm. It catalyses the reaction S-sulfanyl-L-cysteinyl-[protein] + uridine(34) in tRNA + AH2 + ATP = 2-thiouridine(34) in tRNA + L-cysteinyl-[protein] + A + AMP + diphosphate + H(+). In terms of biological role, catalyzes the 2-thiolation of uridine at the wobble position (U34) of tRNA, leading to the formation of s(2)U34. This Clostridium botulinum (strain ATCC 19397 / Type A) protein is tRNA-specific 2-thiouridylase MnmA 2.